The primary structure comprises 875 residues: Alanine--tRNA ligase (875 aa).

Positions 564, 568, 666, and 670 each coordinate Zn(2+).

This sequence belongs to the class-II aminoacyl-tRNA synthetase family. In terms of assembly, homotetramer. Requires Zn(2+) as cofactor.

It localises to the cytoplasm. The catalysed reaction is tRNA(Ala) + L-alanine + ATP = L-alanyl-tRNA(Ala) + AMP + diphosphate. In terms of biological role, catalyzes the attachment of alanine to tRNA(Ala) in a two-step reaction: alanine is first activated by ATP to form Ala-AMP and then transferred to the acceptor end of tRNA(Ala). Also edits incorrectly charged Ser-tRNA(Ala) and Gly-tRNA(Ala) via its editing domain. This is Alanine--tRNA ligase from Yersinia pseudotuberculosis serotype IB (strain PB1/+).